The following is a 768-amino-acid chain: Lon protease (768 aa).

The Lon N-terminal domain maps to 4–198 (APFLPIRDLV…RILDEIVAEM (195 aa)). Residue 349 to 356 (GPPGIGKT) coordinates ATP. Residues 586–768 (TGKIGVVNGL…DDVSKLVFVK (183 aa)) form the Lon proteolytic domain. Active-site residues include S674 and K717.

It belongs to the peptidase S16 family. As to quaternary structure, homohexamer. Organized in a ring with a central cavity.

It is found in the cytoplasm. It catalyses the reaction Hydrolysis of proteins in presence of ATP.. Functionally, ATP-dependent serine protease that mediates the selective degradation of mutant and abnormal proteins as well as certain short-lived regulatory proteins. Required for cellular homeostasis and for survival from DNA damage and developmental changes induced by stress. Degrades polypeptides processively to yield small peptide fragments that are 5 to 10 amino acids long. Binds to DNA in a double-stranded, site-specific manner. In Fusobacterium nucleatum subsp. nucleatum (strain ATCC 25586 / DSM 15643 / BCRC 10681 / CIP 101130 / JCM 8532 / KCTC 2640 / LMG 13131 / VPI 4355), this protein is Lon protease.